The chain runs to 114 residues: Fructose-bisphosphate aldolase 2 (114 aa).

35–38 (NIDT) is a binding site for dihydroxyacetone phosphate.

This sequence belongs to the class II fructose-bisphosphate aldolase family. As to quaternary structure, homodimer. Zn(2+) is required as a cofactor.

The catalysed reaction is beta-D-fructose 1,6-bisphosphate = D-glyceraldehyde 3-phosphate + dihydroxyacetone phosphate. Its pathway is carbohydrate biosynthesis; Calvin cycle. The protein operates within carbohydrate degradation; glycolysis; D-glyceraldehyde 3-phosphate and glycerone phosphate from D-glucose: step 4/4. Functionally, catalyzes the aldol condensation of dihydroxyacetone phosphate (DHAP or glycerone-phosphate) with glyceraldehyde 3-phosphate (G3P) to form fructose 1,6-bisphosphate (FBP) in gluconeogenesis and the reverse reaction in glycolysis. The chain is Fructose-bisphosphate aldolase 2 (cbbA) from Rhodobacter capsulatus (Rhodopseudomonas capsulata).